Here is a 239-residue protein sequence, read N- to C-terminus: MKFYDLMCKAAQDVGLELSKEQYEKFIIYKNLLQEWNEKVNLTAITEDEEIIKKHFIDSIKAFKRDEFKEAKTLIDVGTGAGFPGIPVAIMNENIQVTLLDSLNKRVNFLNLVTEKLGLKNVVAIHSRAEDGARQKNLRESFDIATSRAVANMSVLSEFCLPYVKINGHFIALKGPAVEEEIKDSDKAITTLGGQLLDICEVEIEDTELKHNLVVVKKIKECPKAYPRKAGNVTKKPIK.

Residues G78, F83, 129 to 130, and R148 contribute to the S-adenosyl-L-methionine site; that span reads AE.

This sequence belongs to the methyltransferase superfamily. RNA methyltransferase RsmG family.

The protein localises to the cytoplasm. Its function is as follows. Specifically methylates the N7 position of a guanine in 16S rRNA. The protein is Ribosomal RNA small subunit methyltransferase G of Clostridium botulinum (strain Eklund 17B / Type B).